The chain runs to 105 residues: Large ribosomal subunit protein uL23 (105 aa).

It belongs to the universal ribosomal protein uL23 family. Part of the 50S ribosomal subunit. Contacts protein L29, and trigger factor when it is bound to the ribosome.

One of the early assembly proteins it binds 23S rRNA. One of the proteins that surrounds the polypeptide exit tunnel on the outside of the ribosome. Forms the main docking site for trigger factor binding to the ribosome. This Chloroherpeton thalassium (strain ATCC 35110 / GB-78) protein is Large ribosomal subunit protein uL23.